The chain runs to 107 residues: Small leucine-rich protein 1 (107 aa).

Transmembrane regions (helical) follow at residues 19-39 (AALV…LAMS) and 53-73 (FLFF…IAYF). Residues 85–107 (SQNCDRQHNPKDGSSLYQRMKWT) are disordered.

The protein localises to the membrane. This Homo sapiens (Human) protein is Small leucine-rich protein 1 (SMLR1).